We begin with the raw amino-acid sequence, 245 residues long: Phosphoribosylaminoimidazole-succinocarboxamide synthase (245 aa).

This sequence belongs to the SAICAR synthetase family.

The catalysed reaction is 5-amino-1-(5-phospho-D-ribosyl)imidazole-4-carboxylate + L-aspartate + ATP = (2S)-2-[5-amino-1-(5-phospho-beta-D-ribosyl)imidazole-4-carboxamido]succinate + ADP + phosphate + 2 H(+). Its pathway is purine metabolism; IMP biosynthesis via de novo pathway; 5-amino-1-(5-phospho-D-ribosyl)imidazole-4-carboxamide from 5-amino-1-(5-phospho-D-ribosyl)imidazole-4-carboxylate: step 1/2. This is Phosphoribosylaminoimidazole-succinocarboxamide synthase from Nostoc punctiforme (strain ATCC 29133 / PCC 73102).